The primary structure comprises 108 residues: UPF0102 protein Sden_0272 (108 aa).

The protein belongs to the UPF0102 family.

The sequence is that of UPF0102 protein Sden_0272 from Shewanella denitrificans (strain OS217 / ATCC BAA-1090 / DSM 15013).